We begin with the raw amino-acid sequence, 305 residues long: MIFQRTVKEMVKTTGVGLHSGNKVTLSIKPAPVNYGIVLVRTDLEPAVSIPAKADQVRETTMCTALVNDDGVRISTIEHLFAALAGLGIDNALIEVDAPEIPIMDGSASPWVFLLQSVGIQEQSAAKKYLRIKDTIRVEDGDKWAELKPFNGFRVDFAIDFNHPEIARSQQHMVMDFSTSAFVRDISRARTFGFMRDIEYLRANNLALGGSMENAVVLDEYKVLNPDGLRYEDEFVKHKILDAFGDLYVAGHAIVGEFCAFKTGHALNNQLVRALLAQQDAWELVSFEKDEAPVSFSVPAGAVFA.

3 residues coordinate Zn(2+): H79, H238, and D242. H265 (proton donor) is an active-site residue.

The protein belongs to the LpxC family. Zn(2+) serves as cofactor.

The catalysed reaction is a UDP-3-O-[(3R)-3-hydroxyacyl]-N-acetyl-alpha-D-glucosamine + H2O = a UDP-3-O-[(3R)-3-hydroxyacyl]-alpha-D-glucosamine + acetate. Its pathway is glycolipid biosynthesis; lipid IV(A) biosynthesis; lipid IV(A) from (3R)-3-hydroxytetradecanoyl-[acyl-carrier-protein] and UDP-N-acetyl-alpha-D-glucosamine: step 2/6. In terms of biological role, catalyzes the hydrolysis of UDP-3-O-myristoyl-N-acetylglucosamine to form UDP-3-O-myristoylglucosamine and acetate, the committed step in lipid A biosynthesis. The chain is UDP-3-O-acyl-N-acetylglucosamine deacetylase from Shewanella woodyi (strain ATCC 51908 / MS32).